The sequence spans 127 residues: Protein ApaG (127 aa).

The 125-residue stretch at 3–127 (KSETYRIEVE…FMLAMPRVLH (125 aa)) folds into the ApaG domain.

The protein is Protein ApaG of Azoarcus sp. (strain BH72).